The primary structure comprises 73 residues: Putative antitoxin VapB38 (73 aa).

Probable antitoxin component of a type II toxin-antitoxin (TA) system. Its putative cognate toxin is VapC38. This is Putative antitoxin VapB38 (vapB38) from Mycobacterium tuberculosis (strain ATCC 25618 / H37Rv).